Consider the following 714-residue polypeptide: WD repeat and coiled-coil-containing protein (714 aa).

WD repeat units lie at residues 55–98 (GQFE…LEQN) and 154–194 (KGSG…LVPC). 2 disordered regions span residues 432 to 454 (EEST…SENF) and 531 to 564 (QASR…KEKN). Positions 567 to 595 (QLTQNMERIFTRFAEVQQCLSEIREFTQN) form a coiled coil. The segment at 685-714 (RSARRKSPARPPSGADDFPPESPKSPSMEK) is disordered.

The protein is WD repeat and coiled-coil-containing protein (wdcp) of Danio rerio (Zebrafish).